Reading from the N-terminus, the 222-residue chain is Nudix hydrolase 11 (222 aa).

The Nudix hydrolase domain occupies 31-175 (AKSSAVLVCL…EGERYLLQYF (145 aa)). The short motif at 73-96 (GGKRDQEDKDDIATALREAREEIG) is the Nudix box element. Positions 90 and 94 each coordinate Mg(2+). Residues 186 to 204 (FIIWALTAGILIRVASIVY) form a helical membrane-spanning segment.

Belongs to the Nudix hydrolase family. PCD1 subfamily. Mn(2+) is required as a cofactor. Mg(2+) serves as cofactor. Expressed in roots, stems and leaves.

It is found in the peroxisome membrane. In terms of biological role, coenzyme A diphosphatase which mediates the cleavage of CoA into 3',5'-ADP from CoA and 4'-phosphopantetheine. Can use malonyl-CoA, hexanoyl-CoA, lauroyl-CoA, myristoyl-CoA and palmitoyl-CoA as substrates, but not isobutyryl-CoA or propionyl-CoA. This chain is Nudix hydrolase 11 (NUDT11), found in Arabidopsis thaliana (Mouse-ear cress).